The sequence spans 42 residues: Phospholipase A1 (42 aa).

The protein belongs to the AB hydrolase superfamily. Lipase family. In terms of processing, contains six disulfide bonds. As to expression, expressed by the venom gland.

The protein resides in the secreted. It carries out the reaction a 1,2-diacyl-sn-glycero-3-phosphocholine + H2O = a 2-acyl-sn-glycero-3-phosphocholine + a fatty acid + H(+). Functionally, catalyzes the hydrolysis of phosphatidylcholine with phospholipase A1 activity. May act as an allergen and induce hemolytic activity. In Polistes gallicus (Paper wasp), this protein is Phospholipase A1.